A 262-amino-acid chain; its full sequence is Abhydrolase domain-containing protein ACTT2 (262 aa).

A Peroxisomal targeting signal type 1 motif is present at residues 260-262 (SKL).

It belongs to the AB hydrolase superfamily. AKT2 hydrolase family.

It is found in the peroxisome. It participates in mycotoxin biosynthesis. Abhydrolase domain-containing protein; part of the gene clusters that mediate the biosynthesis of the host-selective toxins (HSTs) ACT-toxins responsible for brown spot of tangerine disease by the tangerine pathotype which affects tangerines and mandarins. ACT-toxins consist of three moieties, 9,10-epoxy-8-hydroxy-9-methyl-decatrienoic acid (EDA), valine and a polyketide. ACT-toxin I is toxic to both citrus and pear; toxin II the 5''-deoxy derivative of ACT-toxin I, is highly toxic to pear and slightly toxic to citrus. On cellular level, ACT-toxins affect plasma membrane of susceptible cells and cause a sudden increase in loss of K(+) after a few minutes of toxin treatment. The acyl-CoA ligase ACTT1, the hydrolase ACTT2, the enoyl-CoA hydratases ACTT3 and ACTT6, and the acyl-CoA synthetase ACTT5 are all involved in the biosynthesis of the AK-, AF- and ACT-toxin common 9,10-epoxy-8-hydroxy-9-methyl-decatrienoic acid (EDA) structural moiety. The exact role of each enzyme, and of additional enzymes identified within the AF-toxin clusters have still to be determined. On the other hand, ACTTS1 to ACTTS4 are specific to the tangerine pathotype. The function of ACTTS3 is to elongate the polyketide chain portion of ACT-toxin that is unique to this toxin. The enoyl-reductase ACTTS2 might complement the missing enoyl-reductase (ER) domain in ACTTS3 in the synthesis of the polyketide portion of ACT-toxin. The roles of the nonribosomal peptide synthetases-related proteins ACTTS1 and ACTTS4 have also still not been elucidated. This is Abhydrolase domain-containing protein ACTT2 from Alternaria alternata (Alternaria rot fungus).